Reading from the N-terminus, the 438-residue chain is Cell division cycle-associated 7-like protein (438 aa).

Positions 9 to 33 (IPKEVADIFSAPSDDEEFVGFQDDV) match the Integrase domain-binding motif 1 (IBM1) motif. Ser21 bears the Phosphoserine mark. The PSIP1-binding stretch occupies residues 56–115 (VCFRSKYFTEELRRIFKEDTDSEMEDFEGFTESELNMSSNPELMESELSDSDKAYPVMND). An Integrase domain-binding motif 2 (IBM2) motif is present at residues 63 to 89 (FTEELRRIFKEDTDSEMEDFEGFTESE). A disordered region spans residues 74-199 (DTDSEMEDFE…ESRAESQENS (126 aa)). Thr75 carries the post-translational modification Phosphothreonine. The span at 75–86 (TDSEMEDFEGFT) shows a compositional bias: acidic residues. Position 77 is a phosphoserine (Ser77). Thr86 bears the Phosphothreonine mark. Residues Ser101, Ser104, Ser135, Ser136, and Ser159 each carry the phosphoserine modification. Basic and acidic residues predominate over residues 152–167 (RTPDKDSSHLLDSKTD). The segment covering 168 to 177 (LRRKKSSRQP) has biased composition (basic residues). Residues Ser183 and Ser185 each carry the phosphoserine modification. Residues 201 to 223 (ALLKRAMNIKENKAMLAQLLAEL) are MYC-binding. Residues Lys210 and Lys213 each participate in a glycyl lysine isopeptide (Lys-Gly) (interchain with G-Cter in SUMO2) cross-link. Position 249 is a phosphoserine (Ser249).

Interacts with MYC. Interacts (via IBM motifs) with PSIP1 (via IBD domain); phosphorylation increases its affinity for PSIP1. Phosphorylation increases its interaction with PSIP1. Expressed in all tissues but not detected in total brain.

Its subcellular location is the cytoplasm. It is found in the nucleus. Its function is as follows. Plays a role in transcriptional regulation as a repressor that inhibits monoamine oxidase A (MAOA) activity and gene expression by binding to the promoter. Plays an important oncogenic role in mediating the full transforming effect of MYC in medulloblastoma cells. Involved in apoptotic signaling pathways; May act downstream of P38-kinase and BCL-2, but upstream of CASP3/caspase-3 as well as CCND1/cyclin D1 and E2F1. This Mus musculus (Mouse) protein is Cell division cycle-associated 7-like protein (Cdca7l).